Here is a 383-residue protein sequence, read N- to C-terminus: Acetylornithine deacetylase (383 aa).

His80 serves as a coordination point for Zn(2+). The active site involves Asp82. Asp112 provides a ligand contact to Zn(2+). The active site involves Glu144. Zn(2+)-binding residues include Glu145, Glu169, and His355.

This sequence belongs to the peptidase M20A family. ArgE subfamily. As to quaternary structure, homodimer. Zn(2+) is required as a cofactor. Co(2+) serves as cofactor. It depends on glutathione as a cofactor.

The protein localises to the cytoplasm. It carries out the reaction N(2)-acetyl-L-ornithine + H2O = L-ornithine + acetate. It functions in the pathway amino-acid biosynthesis; L-arginine biosynthesis; L-ornithine from N(2)-acetyl-L-ornithine (linear): step 1/1. In terms of biological role, catalyzes the hydrolysis of the amide bond of N(2)-acetylated L-amino acids. Cleaves the acetyl group from N-acetyl-L-ornithine to form L-ornithine, an intermediate in L-arginine biosynthesis pathway, and a branchpoint in the synthesis of polyamines. This is Acetylornithine deacetylase from Shigella dysenteriae serotype 1 (strain Sd197).